Here is a 127-residue protein sequence, read N- to C-terminus: Large ribosomal subunit protein eL8 (127 aa).

This sequence belongs to the eukaryotic ribosomal protein eL8 family. Part of the 50S ribosomal subunit. Probably part of the RNase P complex.

It is found in the cytoplasm. In terms of biological role, multifunctional RNA-binding protein that recognizes the K-turn motif in ribosomal RNA, the RNA component of RNase P, box H/ACA, box C/D and box C'/D' sRNAs. The sequence is that of Large ribosomal subunit protein eL8 from Aeropyrum pernix (strain ATCC 700893 / DSM 11879 / JCM 9820 / NBRC 100138 / K1).